A 208-amino-acid polypeptide reads, in one-letter code: Large ribosomal subunit protein bL25 (208 aa).

It belongs to the bacterial ribosomal protein bL25 family. CTC subfamily. Part of the 50S ribosomal subunit; part of the 5S rRNA/L5/L18/L25 subcomplex. Contacts the 5S rRNA. Binds to the 5S rRNA independently of L5 and L18.

In terms of biological role, this is one of the proteins that binds to the 5S RNA in the ribosome where it forms part of the central protuberance. In Syntrophotalea carbinolica (strain DSM 2380 / NBRC 103641 / GraBd1) (Pelobacter carbinolicus), this protein is Large ribosomal subunit protein bL25.